We begin with the raw amino-acid sequence, 414 residues long: MATQRASGLLQRLAQGSLVKQILVGLVLGILLAWISKPAAEAVGLLGTLFVGALKAVAPVLVLMLVMASIANHQHGQKTNIRPILFLYLLGTFSAALAAVVFSFAFPSTLHLSSSAQDIVPPSGIVEVLRGLLMSMVSNPIDALLNANYIGILVWAVGLGFALRHGNETTKNLVNDMSNAVTFMVKLVIRFAPIGIFGLVSSTLATTGFSTLWGYAHLLVVLIGCMLLVALVVNPLLVFWKIRRNPYPLVFACLRESGVYAFFTRSSAANIPVNMALCEKLNLDRDTYSVSIPLGATINMAGAAITITVLTLAAVHTLGVPVDLPTALLLSVVASLCACGASGVAGGSLLLIPLACNMFGIPNDIAMQVVAVGFIIGVLQDSCETALNSSTDVLFTAAACQAEDERLANNALRS.

8 consecutive transmembrane segments (helical) span residues 16–36 (GSLV…AWIS), 46–66 (LGTL…LMLV), 84–104 (ILFL…VFSF), 143–163 (ALLN…GFAL), 180–200 (AVTF…FGLV), 219–239 (LVVL…LLVF), 300–320 (MAGA…TLGV), and 332–352 (VVAS…LLLI).

It belongs to the dicarboxylate/amino acid:cation symporter (DAACS) (TC 2.A.23) family.

It localises to the cell inner membrane. It carries out the reaction L-serine(in) + Na(+)(in) = L-serine(out) + Na(+)(out). It catalyses the reaction L-threonine(in) + Na(+)(in) = L-threonine(out) + Na(+)(out). Involved in the import of serine and threonine into the cell, with the concomitant import of sodium (symport system). This chain is Serine/threonine transporter SstT, found in Salmonella agona (strain SL483).